The following is a 223-amino-acid chain: UPF0441 protein YgiB (223 aa).

The segment covering 178–195 (TVPKTAMAPKPATTTTVT) has biased composition (low complexity). The tract at residues 178 to 223 (TVPKTAMAPKPATTTTVTRGGFGESVAKQSTMQRSAAGTSTRSMGG) is disordered. The segment covering 204–223 (AKQSTMQRSAAGTSTRSMGG) has biased composition (polar residues).

The protein belongs to the UPF0441 family.

This chain is UPF0441 protein YgiB, found in Salmonella paratyphi B (strain ATCC BAA-1250 / SPB7).